Consider the following 144-residue polypeptide: Maximins 3/H14 (144 aa).

The N-terminal stretch at 1-18 is a signal peptide; the sequence is MNFKYIVAVSFLIASAYA. 2 propeptides span residues 19 to 43 and 73 to 122; these read RSVQNDEQSLSQRDVLEEESLREIR and RTAE…KKEK. An Isoleucine amide modification is found at Ile-143.

It belongs to the bombinin family. As to expression, expressed by the skin glands.

It localises to the secreted. Functionally, maximin-3 shows antibacterial activity against both Gram-positive and Gram-negative bacteria. It also shows antimicrobial activity against the fungus C.albicans, but not against A.flavus nor P.uticale. It has little hemolytic activity. It possess a significant cytotoxicity against tumor cell lines. It possess a significant anti-HIV activity. It shows high spermicidal activity. Its function is as follows. Maximin-H14 shows antimicrobial activity against bacteria and against the fungus C.albicans. Shows strong hemolytic activity. This Bombina maxima (Giant fire-bellied toad) protein is Maximins 3/H14.